Consider the following 296-residue polypeptide: Tyrosine recombinase XerC (296 aa).

The region spanning 1-84 is the Core-binding (CB) domain; that stretch reads MNKIQESFLY…TLRSFYEFWM (84 aa). One can recognise a Tyr recombinase domain in the interval 105–286; sequence YLPHFFYEEE…SNQQLRKVYL (182 aa). Residues arginine 145, lysine 169, histidine 238, arginine 241, and histidine 264 contribute to the active site. Tyrosine 273 (O-(3'-phospho-DNA)-tyrosine intermediate) is an active-site residue.

The protein belongs to the 'phage' integrase family. XerC subfamily. As to quaternary structure, forms a cyclic heterotetrameric complex composed of two molecules of XerC and two molecules of XerD.

The protein resides in the cytoplasm. Functionally, site-specific tyrosine recombinase, which acts by catalyzing the cutting and rejoining of the recombining DNA molecules. The XerC-XerD complex is essential to convert dimers of the bacterial chromosome into monomers to permit their segregation at cell division. It also contributes to the segregational stability of plasmids. This chain is Tyrosine recombinase XerC, found in Staphylococcus carnosus (strain TM300).